Here is a 543-residue protein sequence, read N- to C-terminus: Tyrosine-protein kinase Yes (543 aa).

The segment covering 1–20 (MGCIKSKENKSPAIKYRPEN) has biased composition (basic and acidic residues). Residues 1–45 (MGCIKSKENKSPAIKYRPENTPEPVSTSVSHYGAEPTTVSPCPSS) are disordered. G2 carries N-myristoyl glycine lipidation. C3 carries the S-palmitoyl cysteine; in membrane form lipid modification. Position 21 is a phosphothreonine (T21). At Y32 the chain carries Phosphotyrosine. At S40 the chain carries Phosphoserine. The SH3 domain maps to 91 to 152 (GGVTIFVALY…PSNYVAPADS (62 aa)). The SH2 domain maps to 158-255 (WYFGKMGRKD…GLCHKLTTVC (98 aa)). A Protein kinase domain is found at 277–530 (LRLEVKLGQG…YIQSFLEDYF (254 aa)). ATP contacts are provided by residues 283 to 291 (LGQGCFGEV) and K305. A phosphotyrosine mark is found at Y336 and Y345. D396 acts as the Proton acceptor in catalysis. At Y426 the chain carries Phosphotyrosine; by autocatalysis. Y446 carries the post-translational modification Phosphotyrosine. Y537 carries the phosphotyrosine; by CSK modification.

Belongs to the protein kinase superfamily. Tyr protein kinase family. SRC subfamily. In terms of assembly, interacts with YAP1 and CSF1R. Interacts with CTNND1; this interaction allows YES1-mediated activation of FYN and FER and subsequent phosphorylation of CTNND1. Interacts with FASLG. Interacts with IL6ST/gp130. Interacts with SCRIB, when YES1 is in a closed conformation; the interaction facilitates YES1 autophosphorylation. Post-translationally, phosphorylated. Phosphorylation by CSK on the C-terminal tail maintains the enzyme in an inactive state. Autophosphorylation at Tyr-426 maintains enzyme activity by blocking CSK-mediated inhibition. In terms of processing, palmitoylation at Cys-3 promotes membrane localization. Expressed in the epithelial cells of renal proximal tubules and stomach as well as hematopoietic cells in the bone marrow and spleen in the fetal tissues. In adult, expressed in epithelial cells of the renal proximal tubules and present in keratinocytes in the basal epidermal layer of epidermis.

Its subcellular location is the cell membrane. It is found in the cytoplasm. The protein localises to the cytoskeleton. It localises to the microtubule organizing center. The protein resides in the centrosome. Its subcellular location is the cytosol. It is found in the cell junction. It catalyses the reaction L-tyrosyl-[protein] + ATP = O-phospho-L-tyrosyl-[protein] + ADP + H(+). Non-receptor protein tyrosine kinase that is involved in the regulation of cell growth and survival, apoptosis, cell-cell adhesion, cytoskeleton remodeling, and differentiation. Stimulation by receptor tyrosine kinases (RTKs) including EGFR, PDGFR, CSF1R and FGFR leads to recruitment of YES1 to the phosphorylated receptor, and activation and phosphorylation of downstream substrates. Upon EGFR activation, promotes the phosphorylation of PARD3 to favor epithelial tight junction assembly. Participates in the phosphorylation of specific junctional components such as CTNND1 by stimulating the FYN and FER tyrosine kinases at cell-cell contacts. Upon T-cell stimulation by CXCL12, phosphorylates collapsin response mediator protein 2/DPYSL2 and induces T-cell migration. Participates in CD95L/FASLG signaling pathway and mediates AKT-mediated cell migration. Plays a role in cell cycle progression by phosphorylating the cyclin-dependent kinase 4/CDK4 thus regulating the G1 phase. Also involved in G2/M progression and cytokinesis. Catalyzes phosphorylation of organic cation transporter OCT2 which induces its transport activity. The chain is Tyrosine-protein kinase Yes (YES1) from Homo sapiens (Human).